The sequence spans 301 residues: GTPase Era (301 aa).

The region spanning 7 to 175 (YCGFIAIVGR…AAIVRKHLPE (169 aa)) is the Era-type G domain. The G1 stretch occupies residues 15-22 (GRPNVGKS). 15–22 (GRPNVGKS) provides a ligand contact to GTP. The segment at 41-45 (QTTRH) is G2. Positions 62–65 (DTPG) are G3. Residues 62 to 66 (DTPGL) and 124 to 127 (NKVD) contribute to the GTP site. Residues 124-127 (NKVD) form a G4 region. The G5 stretch occupies residues 154-156 (ISA). In terms of domain architecture, KH type-2 spans 206 to 283 (LGAELPYSVT…HLELWVKVKS (78 aa)).

The protein belongs to the TRAFAC class TrmE-Era-EngA-EngB-Septin-like GTPase superfamily. Era GTPase family. Monomer.

The protein resides in the cytoplasm. The protein localises to the cell inner membrane. Its function is as follows. An essential GTPase that binds both GDP and GTP, with rapid nucleotide exchange. Plays a role in 16S rRNA processing and 30S ribosomal subunit biogenesis and possibly also in cell cycle regulation and energy metabolism. The chain is GTPase Era from Shigella dysenteriae serotype 1 (strain Sd197).